We begin with the raw amino-acid sequence, 386 residues long: Ovalbumin (386 aa).

At Gly-2 the chain carries N-acetylglycine. Residues 22–48 (HHANENIFYCPIAIMSALAMVYLGAKD) constitute a signal peptide (not cleaved). Ser-69 carries the phosphoserine modification. An intrachain disulfide couples Cys-74 to Cys-121. Glu-192 is a Ca(2+) binding site. N-linked (GlcNAc...) asparagine glycosylation is present at Asn-293. Ser-345 is subject to Phosphoserine.

This sequence belongs to the serpin family. Ov-serpin subfamily. As to quaternary structure, homodimer. In terms of processing, undergoes proteolytic cleavage first at the canonical P1-P1' site, and then at the P8-P7 site by subtilisin. In terms of tissue distribution, major protein of egg white. Expressed in the magnum of the oviduct (at protein level).

Its subcellular location is the secreted. Non-inhibitory serpin. Storage protein of egg white. The chain is Ovalbumin (SERPINB14) from Gallus gallus (Chicken).